We begin with the raw amino-acid sequence, 104 residues long: Probable head completion protein 1 (104 aa).

Belongs to the skunalikevirus head completion protein 1 family.

The protein localises to the virion. Probable head completion protein that exhibits an open central channel for viral DNA ejection. Part of the head-tail connector by binding to the portal protein and to the head completion protein 2. Plays a role in morphogenesis of the virion capsid after genome packaging. The chain is Probable head completion protein 1 from Lactococcus lactis (Lactococcus lactis bacteriophage p2).